Consider the following 290-residue polypeptide: Eukaryotic translation initiation factor 3 subunit G (290 aa).

Disordered stretches follow at residues 1–35 and 157–200; these read MSRL…DGTK and ESTG…GERM. The 79-residue stretch at 210 to 288 folds into the RRM domain; it reads ATLRVTNVSE…LILRVEFAKR (79 aa).

It belongs to the eIF-3 subunit G family. Component of the eukaryotic translation initiation factor 3 (eIF-3) complex.

The protein localises to the cytoplasm. In terms of biological role, RNA-binding component of the eukaryotic translation initiation factor 3 (eIF-3) complex, which is involved in protein synthesis of a specialized repertoire of mRNAs and, together with other initiation factors, stimulates binding of mRNA and methionyl-tRNAi to the 40S ribosome. The eIF-3 complex specifically targets and initiates translation of a subset of mRNAs involved in cell proliferation. This subunit can bind 18S rRNA. This chain is Eukaryotic translation initiation factor 3 subunit G (tif35), found in Aspergillus clavatus (strain ATCC 1007 / CBS 513.65 / DSM 816 / NCTC 3887 / NRRL 1 / QM 1276 / 107).